The following is a 263-amino-acid chain: MPEGPEIRRAADSLEAAIKGKPLTNAWFAFPQLKSFESSLIGQKVTQIETRGKALLTHFSHNLTLYSHNQLYGVWRVVDAGEHPQTSRILRVRLQTADKAILLYSASDIEMLTPEQLLTHPFLQRVGPDVLDMRLTAEEVKARLLSPKFRNRQFSGLLLDQAFLAGLGNYLRVEILWEVGLAAQRKASQLSEEQLDALSHALLEIPRLSYNTRGVVDDNKHHGALFRFKVFHREGKACERCGGVIERSTLSSRPFYGCPVCQK.

The Schiff-base intermediate with DNA role is filled by Pro2. The active-site Proton donor is Glu3. Lys53 functions as the Proton donor; for beta-elimination activity in the catalytic mechanism. 3 residues coordinate DNA: Gln70, Arg125, and Asn169. Residues Lys229–Lys263 form an FPG-type zinc finger. Residue Arg253 is the Proton donor; for delta-elimination activity of the active site.

It belongs to the FPG family. It depends on Zn(2+) as a cofactor.

It catalyses the reaction 2'-deoxyribonucleotide-(2'-deoxyribose 5'-phosphate)-2'-deoxyribonucleotide-DNA = a 3'-end 2'-deoxyribonucleotide-(2,3-dehydro-2,3-deoxyribose 5'-phosphate)-DNA + a 5'-end 5'-phospho-2'-deoxyribonucleoside-DNA + H(+). In terms of biological role, involved in base excision repair of DNA damaged by oxidation or by mutagenic agents. Acts as a DNA glycosylase that recognizes and removes damaged bases. Has a preference for oxidized pyrimidines, such as thymine glycol, 5,6-dihydrouracil and 5,6-dihydrothymine. Has AP (apurinic/apyrimidinic) lyase activity and introduces nicks in the DNA strand. Cleaves the DNA backbone by beta-delta elimination to generate a single-strand break at the site of the removed base with both 3'- and 5'-phosphates. This Enterobacter sp. (strain 638) protein is Endonuclease 8.